A 192-amino-acid polypeptide reads, in one-letter code: Peptidyl-tRNA hydrolase (192 aa).

Tyr17 lines the tRNA pocket. His22 serves as the catalytic Proton acceptor. TRNA-binding residues include Phe67, Asn69, and Asn115.

The protein belongs to the PTH family. As to quaternary structure, monomer.

It localises to the cytoplasm. It carries out the reaction an N-acyl-L-alpha-aminoacyl-tRNA + H2O = an N-acyl-L-amino acid + a tRNA + H(+). Its function is as follows. Hydrolyzes ribosome-free peptidyl-tRNAs (with 1 or more amino acids incorporated), which drop off the ribosome during protein synthesis, or as a result of ribosome stalling. Catalyzes the release of premature peptidyl moieties from peptidyl-tRNA molecules trapped in stalled 50S ribosomal subunits, and thus maintains levels of free tRNAs and 50S ribosomes. In Methylobacillus flagellatus (strain ATCC 51484 / DSM 6875 / VKM B-1610 / KT), this protein is Peptidyl-tRNA hydrolase.